The chain runs to 478 residues: SPbeta prophage-derived uncharacterized protein YonD (478 aa).

Residues 326–419 (IQSQLNQKDE…KFSTEEVQNL (94 aa)) adopt a coiled-coil conformation.

The chain is SPbeta prophage-derived uncharacterized protein YonD (yonD) from Bacillus subtilis (strain 168).